The following is a 690-amino-acid chain: Kelch-like protein 8 (690 aa).

Residues 111 to 178 (CDVELLVAGS…IYTDKIAITM (68 aa)) form the BTB domain. Residues 213–314 (CMSLYHFSDI…VGWNFLCEAV (102 aa)) form the BACK domain. Kelch repeat units follow at residues 383–430 (AIFC…SANG), 431–477 (NLYA…SIEN), 478–524 (VIYA…VIGR), 525–571 (YLFA…VLDG), 572–618 (YLYA…ALGG), and 620–665 (VYAI…WANV).

As to quaternary structure, component of the BCR(kel-8) E3 ubiquitin ligase complex, at least composed of cul-3, kel-8 and rbx-1. Interacts with rpy-1. Expressed in neurons.

The protein localises to the synapse. The protein operates within protein modification; protein ubiquitination. Its function is as follows. Substrate-specific adapter of a BCR (BTB-CUL3-RBX1) E3 ubiquitin ligase complex that regulates degradation of glutamate receptors in neurons. The BCR(kel-8) ubiquitin ligase complex mediates ubiquitination and subsequent degradation of rpy-1. Indirectly regulates the protein turnover of glr-1, possibly via ubiquitination and degradation of rpy-1. In Caenorhabditis elegans, this protein is Kelch-like protein 8 (kel-8).